The primary structure comprises 354 residues: GTPase Obg (354 aa).

The Obg domain maps to 1–159 (MKFVDEVKIH…RDLVLELKLL (159 aa)). Positions 160-333 (ADVGIVGYPN…LLDAVGRALF (174 aa)) constitute an OBG-type G domain. Residues 166–173 (GYPNAGKS), 191–195 (FTTLT), 212–215 (DIPG), 283–286 (TKID), and 314–316 (SAV) contribute to the GTP site. The Mg(2+) site is built by Ser173 and Thr193.

This sequence belongs to the TRAFAC class OBG-HflX-like GTPase superfamily. OBG GTPase family. Monomer. It depends on Mg(2+) as a cofactor.

The protein resides in the cytoplasm. An essential GTPase which binds GTP, GDP and possibly (p)ppGpp with moderate affinity, with high nucleotide exchange rates and a fairly low GTP hydrolysis rate. Plays a role in control of the cell cycle, stress response, ribosome biogenesis and in those bacteria that undergo differentiation, in morphogenesis control. This chain is GTPase Obg, found in Anaeromyxobacter dehalogenans (strain 2CP-C).